We begin with the raw amino-acid sequence, 56 residues long: Large ribosomal subunit protein bL32 (56 aa).

A disordered region spans residues 1-26 (MAVQQNKKSRSKRGMRRSHDALSTAQ). Over residues 7 to 16 (KKSRSKRGMR) the composition is skewed to basic residues.

This sequence belongs to the bacterial ribosomal protein bL32 family.

The sequence is that of Large ribosomal subunit protein bL32 from Shewanella amazonensis (strain ATCC BAA-1098 / SB2B).